Here is a 534-residue protein sequence, read N- to C-terminus: CAP-Gly domain-containing linker protein 3 (534 aa).

The segment covering 1-16 (MTREDLPDSTPEESKL) has biased composition (basic and acidic residues). Positions 1–33 (MTREDLPDSTPEESKLPMEFQSPLLEKRRRPVV) are disordered. ANK repeat units lie at residues 107-148 (TDMT…LRSR), 150-173 (TNMN…LLKA), and 187-299 (NHGT…KAGT). The CAP-Gly 1 domain occupies 304–346 (GTTEFASGQWVGVELDEPDGKNDGSVGGIRYFICPPKQGIFAP). The tract at residues 349 to 391 (KISKAPDQPPSSVTSTPRTPRVDFSRVTGKGRKEKKATHKKSL) is disordered. Over residues 358–367 (PSSVTSTPRT) the composition is skewed to low complexity. Over residues 377–390 (GKGRKEKKATHKKS) the composition is skewed to basic residues. Residues 423–465 (GKTDFAPGYWFGIELEKPTGKHDGSVFGVRYFTCSAKNGVFAP) enclose the CAP-Gly 2 domain. The segment at 475-534 (PKDPQTDNNDMKKVHQVTMTQPKRNFTKVRTPKEIASENSMSRILFCCWFPWLLRAEMKS) is goLD.

In terms of assembly, homodimer.

It localises to the cytoplasm. The protein resides in the golgi apparatus. Its subcellular location is the golgi stack. Its function is as follows. Functions as a cytoplasmic linker protein. Involved in TGN-endosome dynamics. The polypeptide is CAP-Gly domain-containing linker protein 3 (clip3) (Xenopus laevis (African clawed frog)).